The chain runs to 335 residues: uncharacterized protein (335 aa).

Disordered regions lie at residues I152 to D179 and L252 to L271. Phosphoserine occurs at positions 257 and 260. A compositionally biased stretch (polar residues) spans S257–L271.

This is an uncharacterized protein from Schizosaccharomyces pombe (strain 972 / ATCC 24843) (Fission yeast).